Here is a 189-residue protein sequence, read N- to C-terminus: Large ribosomal subunit protein eL20 (189 aa).

This sequence belongs to the eukaryotic ribosomal protein eL20 family.

Its subcellular location is the cytoplasm. The protein is Large ribosomal subunit protein eL20 (RPL18A) of Tetrahymena thermophila.